A 365-amino-acid chain; its full sequence is tRNA/tmRNA (uracil-C(5))-methyltransferase (365 aa).

Positions 189, 217, 222, 238, and 298 each coordinate S-adenosyl-L-methionine. The active-site Nucleophile is the Cys-323. Catalysis depends on Glu-357, which acts as the Proton acceptor.

The protein belongs to the class I-like SAM-binding methyltransferase superfamily. RNA M5U methyltransferase family. TrmA subfamily.

It catalyses the reaction uridine(54) in tRNA + S-adenosyl-L-methionine = 5-methyluridine(54) in tRNA + S-adenosyl-L-homocysteine + H(+). The enzyme catalyses uridine(341) in tmRNA + S-adenosyl-L-methionine = 5-methyluridine(341) in tmRNA + S-adenosyl-L-homocysteine + H(+). Functionally, dual-specificity methyltransferase that catalyzes the formation of 5-methyluridine at position 54 (m5U54) in all tRNAs, and that of position 341 (m5U341) in tmRNA (transfer-mRNA). The polypeptide is tRNA/tmRNA (uracil-C(5))-methyltransferase (Shewanella piezotolerans (strain WP3 / JCM 13877)).